A 376-amino-acid polypeptide reads, in one-letter code: Nuclear egress protein 1 (376 aa).

At S19 the chain carries Phosphoserine. Residues R22 to P57 are disordered. Residues V33 to N45 show a composition bias toward polar residues. The CCCH-type zinc-finger motif lies at C106–H211. A disordered region spans residues V316–P376. Over residues V317 to P332 the composition is skewed to polar residues.

The protein belongs to the herpesviridae NEC1 protein family. In terms of assembly, forms a heterohexameric complex with NEC2. Interacts with capsid vertex specific component 2/CVC2; this interaction directs the capsid to the host inner nuclear membrane to initiate budding. In terms of processing, phosphorylated at serine residues in the N-terminus. This phosphorylation regulates the localization within the inner nuclear membrane. Phosphorylation by viral kinase UL97 at Ser-19 plays an important role for correct viral nuclear egress complex (NEC) localization.

Its subcellular location is the host nucleus inner membrane. In terms of biological role, plays an essential role in virion nuclear egress, the first step of virion release from infected cell. Within the host nucleus, NEC1 interacts with the newly formed capsid through the vertexes and directs it to the inner nuclear membrane by associating with NEC2. Induces the budding of the capsid at the inner nuclear membrane as well as its envelopment into the perinuclear space. There, the NEC1/NEC2 complex promotes the fusion of the enveloped capsid with the outer nuclear membrane and the subsequent release of the viral capsid into the cytoplasm where it will reach the secondary budding sites in the host Golgi or trans-Golgi network. The chain is Nuclear egress protein 1 from Homo sapiens (Human).